Reading from the N-terminus, the 373-residue chain is Caspase-4 (373 aa).

The interval 1–59 (MAENKHPDKPLKVLEQLGKEVLTEYLEKLVQSNVLKLKEEDKQKFNNAERSDKRWVFVD) is required for LPS-binding. The propeptide occupies 1–80 (MAENKHPDKP…MLLQTFFSVD (80 aa)). Positions 1–91 (MAENKHPDKP…GSHHGEANLE (91 aa)) constitute a CARD domain. Ser-83 carries the post-translational modification Phosphoserine. Residues His-206 and Cys-254 contribute to the active site. A propeptide spanning residues 267–285 (SSKPQLCRGVDLPRNMEAD) is cleaved from the precursor. Arg-310 is subject to (Microbial infection) ADP-riboxanated arginine.

The protein belongs to the peptidase C14A family. In terms of assembly, heterotetramer that consists of two anti-parallel arranged heterodimers, each one formed by a 20 kDa (Caspase-4 subunit p20) and a 10 kDa (Caspase-4 subunit p10) subunit. Upon direct LPS-binding, forms large homooligomers, resulting in its activation. These oligomers are often referred to as 'non-canonical inflammasomes'. In its precursor form, interacts with TMEM214; this interaction is required for association with the endoplasmic reticulum membrane. Interacts with CASP1. Interacts with NOD2. Interacts with Serpinb1a, Serpinb1b and Serpinb1c; these interactions regulate CASP4 activity. Heterotetramer that consists of two anti-parallel arranged heterodimers, each one formed by a 20 kDa (Caspase-4 subunit p20) and a 10 kDa (Caspase-4 subunit p10) subunit. In terms of processing, in response to activation signals, undergoes autoproteolytic cleavage and activation. Post-translationally, (Microbial infection) ADP-riboxanation by S.flexneri OspC3 blocks CASP4 autoprocessing, preventing CASP4 activation and ability to recognize and cleave GSDMD, thereby thwarting the inflammasome/pyroptosis-mediated defense. As to expression, widely expressed, including in thymus, lung and spleen (at protein level). Very low levels, if any, in the brain.

The protein localises to the cytoplasm. It localises to the cytosol. It is found in the endoplasmic reticulum membrane. The protein resides in the mitochondrion. Its subcellular location is the inflammasome. The protein localises to the secreted. The enzyme catalyses Strict requirement for Asp at the P1 position and has a preferred cleavage sequence of (Ile/Leu/Val/Phe)-Gly-His-Asp-|-.. Activated by homooligomerization induced by direct binding to cytosolic LPS, in a TLR4-independent manner. In addition to LPS, CASP4/CASP11 may also be activated by oxidized phospholipid 1-palmitoyl-2-arachidonoyl- sn-glycero-3-phosphorylcholine, an oxidized phospholipid (oxPAPC), in dendritic cells, promoting adaptive immunity. The role of oxPAPC is however unclear and another report suggests that oxPAPC competes with LPS-binding and inhibits the non-canonical inflammasome in macrophages. Functionally, inflammatory caspase that acts as the effector of the non-canonical inflammasome by mediating lipopolysaccharide (LPS)-induced pyroptosis. Also indirectly activates the NLRP3 and NLRP6 inflammasomes. Acts as a thiol protease that cleaves a tetrapeptide after an Asp residue at position P1: catalyzes cleavage of CGAS and GSDMD. In contrast to its human ortholog, does not cleave IL18. Effector of the non-canonical inflammasome independently of NLRP3 inflammasome and CASP1: the non-canonical inflammasome promotes pyroptosis through GSDMD cleavage without involving secretion of cytokine IL1B and IL18. In the non-canonical inflammasome, CASP4/CASP11 is activated by direct binding to the lipid A moiety of LPS without the need of an upstream sensor. LPS-binding promotes CASP4/CASP11 activation and CASP4/CASP11-mediated cleavage of GSDMD, followed by pyroptosis of infected cells and their extrusion into the gut lumen. Also indirectly promotes secretion of mature cytokines (IL1A, IL18 and HMGB1) downstream of GSDMD-mediated pyroptosis via activation of the NLRP3 and NLRP6 inflammasomes. Involved in NLRP3-dependent CASP1 activation and IL1B and IL18 secretion in response to non-canonical activators, such as UVB radiation or cholera enterotoxin. Involved in NLRP6 inflammasome-dependent activation in response to lipoteichoic acid (LTA), a cell-wall component of Gram-positive bacteria, which leads to CASP1 activation and IL1B and IL18 secretion. Involved in LPS-induced IL6 secretion; this activity may not require caspase enzymatic activity. The non-canonical inflammasome is required for innate immunity to cytosolic, but not vacuolar, bacteria. Plays a crucial role in the restriction of S.typhimurium replication in colonic epithelial cells during infection. Activation of the non-canonical inflammasome in brain endothelial cells can lead to excessive pyroptosis, leading to blood-brain barrier breakdown. Pyroptosis limits bacterial replication, while cytokine secretion promotes the recruitment and activation of immune cells and triggers mucosal inflammation. May also act as an activator of adaptive immunity in dendritic cells, following activation by oxidized phospholipid 1-palmitoyl-2-arachidonoyl- sn-glycero-3-phosphorylcholine, an oxidized phospholipid (oxPAPC). Cleavage of GSDMD is not strictly dependent on the consensus cleavage site but depends on an exosite interface on CASP4/CASP11 that recognizes and binds the Gasdermin-D, C-terminal (GSDMD-CT) part. In contrast, it does not directly process IL1B. During non-canonical inflammasome activation, cuts CGAS and may play a role in the regulation of antiviral innate immune activation. The chain is Caspase-4 from Mus musculus (Mouse).